Reading from the N-terminus, the 202-residue chain is Nucleoside triphosphate pyrophosphatase (202 aa).

The active-site Proton acceptor is aspartate 79.

The protein belongs to the Maf family. The cofactor is a divalent metal cation.

Its subcellular location is the cytoplasm. The catalysed reaction is a ribonucleoside 5'-triphosphate + H2O = a ribonucleoside 5'-phosphate + diphosphate + H(+). It carries out the reaction a 2'-deoxyribonucleoside 5'-triphosphate + H2O = a 2'-deoxyribonucleoside 5'-phosphate + diphosphate + H(+). Nucleoside triphosphate pyrophosphatase. May have a dual role in cell division arrest and in preventing the incorporation of modified nucleotides into cellular nucleic acids. This chain is Nucleoside triphosphate pyrophosphatase, found in Nitrobacter winogradskyi (strain ATCC 25391 / DSM 10237 / CIP 104748 / NCIMB 11846 / Nb-255).